Here is a 563-residue protein sequence, read N- to C-terminus: Alpha-humulene synthase (563 aa).

4 residues coordinate Mg(2+): aspartate 316, aspartate 320, aspartate 461, and glutamate 469. The DDXXD motif signature appears at 316–320; that stretch reads DDIYD.

Belongs to the terpene synthase family. Tpsa subfamily. It depends on Mg(2+) as a cofactor. The cofactor is Mn(2+). In terms of tissue distribution, expressed in trichomes, cones and young leaves.

It catalyses the reaction (2E,6E)-farnesyl diphosphate = alpha-humulene + diphosphate. It participates in sesquiterpene biosynthesis. It functions in the pathway secondary metabolite biosynthesis; terpenoid biosynthesis. In terms of biological role, sesquiterpene synthase that catalyzes the formation of alpha-humulene. Can use farnesyl diphosphate (FPP) as substrate, but not geranyl diphosphate (GPP) or geranylgeranyl diphosphate (GGPP). The sequence is that of Alpha-humulene synthase from Humulus lupulus (European hop).